Reading from the N-terminus, the 1396-residue chain is Helicase ARIP4 (1396 aa).

Positions 1 to 103 (MSDASISGSE…LQKPANLRRN (103 aa)) are disordered. The segment covering 11–49 (PELDPEDMEEEEEDDEDDDEEEEEEEDEEDNDGDDEDDK) has biased composition (acidic residues). A compositionally biased stretch (polar residues) spans 75-84 (RSTTSGQSGQ). The Helicase ATP-binding domain maps to 290-510 (RFSGSSGFGC…WCMVDFVRPD (221 aa)). 303-310 (HSMGLGKT) lines the ATP pocket. A DEAH box motif is present at residues 461-464 (DEGH). The short motif at 549 to 553 (LHSLL) is the LXXLL motif 1 element. Residues 717-891 (KMVLLFHLIE…RVVDDLNPEV (175 aa)) form the Helicase C-terminal domain. Disordered regions lie at residues 1117–1168 (SGKQ…PDSP) and 1194–1250 (NLGL…STMN). Polar residues-rich tracts occupy residues 1128–1148 (QATS…RHST) and 1218–1238 (DQSS…SYPN). The LXXLL motif 2 signature appears at 1273-1277 (LPSLL). The disordered stretch occupies residues 1340 to 1396 (GLPTNNPASTFPGYLSSHSNYQASPGTSSRPLPSGETELGSCEEDGRDDDVVEVTGE). Over residues 1355-1370 (SSHSNYQASPGTSSRP) the composition is skewed to polar residues. The segment covering 1380–1396 (SCEEDGRDDDVVEVTGE) has biased composition (acidic residues).

It belongs to the SNF2/RAD54 helicase family.

The protein resides in the nucleus. The catalysed reaction is ATP + H2O = ADP + phosphate + H(+). Functionally, DNA helicase that modulates androgen receptor (AR)-dependent transactivation in a promoter-dependent manner. This Xenopus tropicalis (Western clawed frog) protein is Helicase ARIP4 (rad54l2).